A 121-amino-acid chain; its full sequence is Large ribosomal subunit protein bL19 (121 aa).

This sequence belongs to the bacterial ribosomal protein bL19 family.

This protein is located at the 30S-50S ribosomal subunit interface and may play a role in the structure and function of the aminoacyl-tRNA binding site. In Chlamydia caviae (strain ATCC VR-813 / DSM 19441 / 03DC25 / GPIC) (Chlamydophila caviae), this protein is Large ribosomal subunit protein bL19.